A 502-amino-acid chain; its full sequence is Lysine--tRNA ligase (502 aa).

Mg(2+)-binding residues include Glu-413 and Glu-420.

Belongs to the class-II aminoacyl-tRNA synthetase family. As to quaternary structure, homodimer. The cofactor is Mg(2+).

Its subcellular location is the cytoplasm. It carries out the reaction tRNA(Lys) + L-lysine + ATP = L-lysyl-tRNA(Lys) + AMP + diphosphate. The chain is Lysine--tRNA ligase from Haemophilus influenzae (strain 86-028NP).